A 331-amino-acid chain; its full sequence is Isopentenyl-diphosphate delta-isomerase (331 aa).

4–5 is a substrate binding site; it reads RK. FMN is bound by residues 59–61, Ser-89, and Asn-116; that span reads AMT. Position 146 (Gln-146) interacts with substrate. Glu-147 serves as a coordination point for Mg(2+). Residues Lys-178, Ser-203, Thr-208, 252–254, and 273–274 contribute to the FMN site; these read GIR and SR.

Belongs to the IPP isomerase type 2 family. In terms of assembly, homooctamer. Dimer of tetramers. FMN serves as cofactor. It depends on NADPH as a cofactor. Requires Mg(2+) as cofactor.

The protein resides in the cytoplasm. The enzyme catalyses isopentenyl diphosphate = dimethylallyl diphosphate. Its function is as follows. Involved in the biosynthesis of isoprenoids. Catalyzes the 1,3-allylic rearrangement of the homoallylic substrate isopentenyl (IPP) to its allylic isomer, dimethylallyl diphosphate (DMAPP). The polypeptide is Isopentenyl-diphosphate delta-isomerase (Streptococcus mutans serotype c (strain ATCC 700610 / UA159)).